Reading from the N-terminus, the 341-residue chain is HTH-type transcriptional repressor PurR (341 aa).

One can recognise an HTH lacI-type domain in the interval 2–56; it reads ATIKDVAKRAGVSTTTVSHVINKTRFVAEETKAAVGAAIKELHYSPSAVARSLKV. Residues 4–23 constitute a DNA-binding region (H-T-H motif); sequence IKDVAKRAGVSTTTVSHVIN. Residues 48–56 mediate DNA binding; it reads SAVARSLKV. Tyr-73, Arg-190, Thr-192, Phe-221, and Asp-275 together coordinate hypoxanthine.

Homodimer.

It participates in purine metabolism; purine nucleotide biosynthesis [regulation]. Is the main repressor of the genes involved in the de novo synthesis of purine nucleotides, regulating purB, purC, purEK, purF, purHD, purL, purMN and guaBA expression. PurR is allosterically activated to bind its cognate DNA by binding the purine corepressors, hypoxanthine or guanine, thereby effecting transcription repression. The sequence is that of HTH-type transcriptional repressor PurR from Serratia proteamaculans (strain 568).